A 437-amino-acid chain; its full sequence is Serine hydroxymethyltransferase (437 aa).

Residues leucine 130 and glycine 134–leucine 136 contribute to the (6S)-5,6,7,8-tetrahydrofolate site. Lysine 239 is subject to N6-(pyridoxal phosphate)lysine.

It belongs to the SHMT family. In terms of assembly, homodimer. Requires pyridoxal 5'-phosphate as cofactor.

Its subcellular location is the cytoplasm. It carries out the reaction (6R)-5,10-methylene-5,6,7,8-tetrahydrofolate + glycine + H2O = (6S)-5,6,7,8-tetrahydrofolate + L-serine. Its pathway is one-carbon metabolism; tetrahydrofolate interconversion. It participates in amino-acid biosynthesis; glycine biosynthesis; glycine from L-serine: step 1/1. In terms of biological role, catalyzes the reversible interconversion of serine and glycine with tetrahydrofolate (THF) serving as the one-carbon carrier. This reaction serves as the major source of one-carbon groups required for the biosynthesis of purines, thymidylate, methionine, and other important biomolecules. Also exhibits THF-independent aldolase activity toward beta-hydroxyamino acids, producing glycine and aldehydes, via a retro-aldol mechanism. The polypeptide is Serine hydroxymethyltransferase (Bartonella quintana (strain Toulouse) (Rochalimaea quintana)).